We begin with the raw amino-acid sequence, 321 residues long: tRNA(Ile)-lysidine synthase (321 aa).

30-35 contributes to the ATP binding site; it reads SGGSDS.

This sequence belongs to the tRNA(Ile)-lysidine synthase family.

Its subcellular location is the cytoplasm. It catalyses the reaction cytidine(34) in tRNA(Ile2) + L-lysine + ATP = lysidine(34) in tRNA(Ile2) + AMP + diphosphate + H(+). Its function is as follows. Ligates lysine onto the cytidine present at position 34 of the AUA codon-specific tRNA(Ile) that contains the anticodon CAU, in an ATP-dependent manner. Cytidine is converted to lysidine, thus changing the amino acid specificity of the tRNA from methionine to isoleucine. The protein is tRNA(Ile)-lysidine synthase of Chlamydia muridarum (strain MoPn / Nigg).